The chain runs to 791 residues: Protein SEY1 (791 aa).

Over 1-685 the chain is Cytoplasmic; the sequence is MSEDGASKCQ…KRSTIKSHTH (685 aa). Residues 40–268 enclose the GB1/RHD3-type G domain; sequence GLDYHVISVF…REDYYLSGKY (229 aa). 50 to 57 is a binding site for GTP; that stretch reads GSQSSGKS. A helical membrane pass occupies residues 686–706; it reads IPMWIYAIIAVLGWNEFMLVL. Residues 707–709 are Lumenal-facing; that stretch reads RNP. The chain crosses the membrane as a helical span at residues 710–730; the sequence is LFIALMLLIVGAAYTVHRLNL. The Cytoplasmic portion of the chain corresponds to 731–791; the sequence is WTPLATFASA…NETKENANES (61 aa). Residues 763–791 form a disordered region; it reads PKNASSKPVESFEMQDLSVNETKENANES.

It belongs to the TRAFAC class dynamin-like GTPase superfamily. GB1/RHD3 GTPase family. RHD3 subfamily.

It localises to the endoplasmic reticulum membrane. Functionally, cooperates with the reticulon proteins and tubule-shaping DP1 family proteins to generate and maintain the structure of the tubular endoplasmic reticulum network. Has GTPase activity, which is required for its function in ER organization. The chain is Protein SEY1 from Eremothecium gossypii (strain ATCC 10895 / CBS 109.51 / FGSC 9923 / NRRL Y-1056) (Yeast).